Here is a 419-residue protein sequence, read N- to C-terminus: MEKMNITNQEHDAFVKAHPNGDLLQLTKWAETKRLTGWYSKRVAVGEDGEIKGVGQLLFKKIPKLPFTLCYVSRGFVTDYSDKAALEQLLEETKKVAKAEKAYAIKIDPDVEVDKGIDALKNLNALGFKHKGFKEGLSKDYIQPRMTMITPIDKSDEEIFQSFERRNRSKVRLSLKRGTKVERSNREGLKNFAELMKITGERDGFLTRDLSYFQNIYDSLHEDGDAELFLVKLEPKPVLDDIDNELKELESEKTQLQNKYERKQVKKTKNKLNDVEAKIQKSIERKDDMTDLLAKHPNGIYLSGALLMFAGSKSYYLYGASSNDYRDFLPNHHMQYEMMKFAREHGAKTYDFGGTDNNPDKDSEHYGLWAFKRVWGTYLSEKIGEFDYVLNQPLYQLIEQVKPRLTKAKIKISRKLKGK.

This sequence belongs to the FemABX family.

It is found in the cytoplasm. It carries out the reaction beta-D-GlcNAc-(1-&gt;4)-Mur2Ac(oyl-L-Ala-D-isoglutaminyl-L-Lys-D-Ala-D-Ala)-di-trans,octa-cis-undecaprenyl diphosphate + glycyl-tRNA(Gly) = beta-D-GlcNAc-(1-&gt;4)-Mur2Ac(oyl-L-Ala-D-isoglutaminyl-L-Lys-(N(6)-Gly)-D-Ala-D-Ala)-di-trans,octa-cis-undecaprenyl diphosphate + tRNA(Gly) + H(+). In terms of biological role, catalyzes the incorporation of amino acid(s) into the interchain peptide bridge of peptidoglycan, using aminoacyl-tRNA as amino acid donor. The polypeptide is Lipid II:glycine glycyltransferase (femX) (Staphylococcus haemolyticus (strain JCSC1435)).